We begin with the raw amino-acid sequence, 65 residues long: Large ribosomal subunit protein bL33c (65 aa).

The protein belongs to the bacterial ribosomal protein bL33 family.

Its subcellular location is the plastid. It is found in the chloroplast. This chain is Large ribosomal subunit protein bL33c, found in Zygnema circumcarinatum (Green alga).